We begin with the raw amino-acid sequence, 341 residues long: MFVDKTLMITGGTGSFGNAVLSRFLKSDITNDIKEIRIFSRDEKKQEDMRIALNNPKLKFYIGDVRNYKSIDEAMHGVDYVFHAAALKQVPTCEFYPMEAINTNVLGAENVLSAAINNKVAKVIVLSTDKAVYPINAMGLSKALMEKLAVAKARMRSQGETVLCVTRYGNVMASRGSVIPLFINQIKQDKDLTITEPSMTRFLMSLVDSVDLVLYAFEHGRQGDIFVQKSPASTIEVLAKALQEIFGSKNELRFIGTRHGEKHYESLVSSEEMAKADDLGGYYRIPMDGRDLNYAKYFVEGEKKVALLEDYNSHNTKRLNLEEVKELLLNLDYVQEELKNA.

This sequence belongs to the polysaccharide synthase family.

It carries out the reaction UDP-alpha-D-glucose = UDP-alpha-D-galactose. Its function is as follows. Epimerizes UDP-galactose to UDP-glucose. The protein is UDP-glucose 4-epimerase (capD) of Rickettsia felis (strain ATCC VR-1525 / URRWXCal2) (Rickettsia azadi).